We begin with the raw amino-acid sequence, 203 residues long: Ras-like protein 1 (203 aa).

17–24 (GGGGVGKS) contacts GTP. Residues 39–47 (YDPTIEDSY) carry the Effector region motif. GTP contacts are provided by residues 64–68 (DTAGQ) and 123–126 (NKCD). Cys200 is subject to Cysteine methyl ester. The S-farnesyl cysteine moiety is linked to residue Cys200. Residues 201-203 (ILM) constitute a propeptide, removed in mature form.

It belongs to the small GTPase superfamily. Ras family.

It is found in the cell membrane. It catalyses the reaction GTP + H2O = GDP + phosphate + H(+). With respect to regulation, alternates between an inactive form bound to GDP and an active form bound to GTP. Activated by a guanine nucleotide-exchange factor (GEF) and inactivated by a GTPase-activating protein (GAP). This is Ras-like protein 1 (RAS1) from Mucor circinelloides f. lusitanicus (Mucor racemosus var. lusitanicus).